A 182-amino-acid polypeptide reads, in one-letter code: Orotate phosphoribosyltransferase (182 aa).

5-phospho-alpha-D-ribose 1-diphosphate-binding positions include Arg-91, Lys-92, Lys-95, His-97, and 117–125; that span reads EDVTTTGGS. Orotate-binding residues include Thr-121 and Arg-149.

It belongs to the purine/pyrimidine phosphoribosyltransferase family. PyrE subfamily. Homodimer. Mg(2+) serves as cofactor.

It carries out the reaction orotidine 5'-phosphate + diphosphate = orotate + 5-phospho-alpha-D-ribose 1-diphosphate. It functions in the pathway pyrimidine metabolism; UMP biosynthesis via de novo pathway; UMP from orotate: step 1/2. In terms of biological role, catalyzes the transfer of a ribosyl phosphate group from 5-phosphoribose 1-diphosphate to orotate, leading to the formation of orotidine monophosphate (OMP). The protein is Orotate phosphoribosyltransferase of Pyrococcus furiosus (strain ATCC 43587 / DSM 3638 / JCM 8422 / Vc1).